A 111-amino-acid chain; its full sequence is Ribosome-binding factor A (111 aa).

This sequence belongs to the RbfA family. Monomer. Binds 30S ribosomal subunits, but not 50S ribosomal subunits or 70S ribosomes.

It localises to the cytoplasm. In terms of biological role, one of several proteins that assist in the late maturation steps of the functional core of the 30S ribosomal subunit. Associates with free 30S ribosomal subunits (but not with 30S subunits that are part of 70S ribosomes or polysomes). Required for efficient processing of 16S rRNA. May interact with the 5'-terminal helix region of 16S rRNA. The sequence is that of Ribosome-binding factor A from Helicobacter pylori (strain HPAG1).